Consider the following 122-residue polypeptide: MIQQESRLKIADNTGAREILCIRVLGGSTRRFAGIGDVIVATVKEAAPGGNVKSGEIVKAVIVRTKKETRRADGSYISFDENAAVIIKNDNEPRGTRIFGPVARELREKKFMKIVSLAPEVI.

Belongs to the universal ribosomal protein uL14 family. As to quaternary structure, part of the 50S ribosomal subunit. Forms a cluster with proteins L3 and L19. In the 70S ribosome, L14 and L19 interact and together make contacts with the 16S rRNA in bridges B5 and B8.

Its function is as follows. Binds to 23S rRNA. Forms part of two intersubunit bridges in the 70S ribosome. The polypeptide is Large ribosomal subunit protein uL14 (Corynebacterium efficiens (strain DSM 44549 / YS-314 / AJ 12310 / JCM 11189 / NBRC 100395)).